Here is a 385-residue protein sequence, read N- to C-terminus: Glucose-fructose oxidoreductase domain-containing protein 2 (385 aa).

The signal sequence occupies residues 1 to 25; the sequence is MKLLPGVGVFGTGSSARVLVPLLRA.

The protein belongs to the Gfo/Idh/MocA family.

It is found in the secreted. The protein localises to the extracellular space. The protein resides in the extracellular matrix. Its function is as follows. Promotes matrix assembly. This Mus musculus (Mouse) protein is Glucose-fructose oxidoreductase domain-containing protein 2 (Gfod2).